Reading from the N-terminus, the 430-residue chain is Purine nucleoside phosphorylase LACC1 (430 aa).

Lys-247 carries the post-translational modification N6-acetyllysine. 3 residues coordinate Zn(2+): His-250, Cys-284, and His-301.

The protein belongs to the purine nucleoside phosphorylase YfiH/LACC1 family. As to quaternary structure, interacts with FASN. Interacts with SDHA. Interacts with ATF6, EIF2AK3 and ERN1. Post-translationally, phosphorylated on tyrosine residues. Ubiquitously expressed, with higher expression levels in immune-related tissues such as lymph nodes and spleen. Expressed in both intestinal and peripheral myeloid-derived cells.

It is found in the cytoplasm. Its subcellular location is the nucleus. It localises to the endoplasmic reticulum. The protein resides in the peroxisome. The catalysed reaction is adenosine + phosphate = alpha-D-ribose 1-phosphate + adenine. It catalyses the reaction inosine + phosphate = alpha-D-ribose 1-phosphate + hypoxanthine. The enzyme catalyses guanosine + phosphate = alpha-D-ribose 1-phosphate + guanine. It carries out the reaction S-methyl-5'-thioadenosine + phosphate = 5-(methylsulfanyl)-alpha-D-ribose 1-phosphate + adenine. The catalysed reaction is adenosine + H2O + H(+) = inosine + NH4(+). Its function is as follows. Purine nucleoside enzyme that catalyzes the phosphorolysis of adenosine, guanosine and inosine nucleosides, yielding D-ribose 1-phosphate and the respective free bases, adenine, guanine and hypoxanthine. Also catalyzes the phosphorolysis of S-methyl-5'-thioadenosine into adenine and S-methyl-5-thio-alpha-D-ribose 1-phosphate. Also has adenosine deaminase activity. Acts as a regulator of innate immunity in macrophages by modulating the purine nucleotide metabolism, thereby regulating the metabolic function and bioenergetic state of macrophages. Enables a purine nucleotide cycle between adenosine and inosine monophosphate and adenylosuccinate that prevents cytoplasmic acidification and balances the cytoplasmic-mitochondrial redox interface. The purine nucleotide cycle consumes aspartate and releases fumarate in a manner involving fatty acid oxidation and ATP-citrate lyase activity. Participates in pattern recognition receptor (PRR)-induced cytokines in macrophages: associates with the NOD2-signaling complex and promotes optimal NOD2-induced signaling, cytokine secretion and bacterial clearance. Localizes to the endoplasmic reticulum upon PRR stimulation of macrophages and associates with endoplasmic reticulum-stress sensors, promoting the endoplasmic reticulum unfolded protein response (UPR). Does not show laccase activity. In Homo sapiens (Human), this protein is Purine nucleoside phosphorylase LACC1.